A 462-amino-acid chain; its full sequence is Chromosomal replication initiator protein DnaA (462 aa).

The interval 1–84 (MAVSLWQQCI…RFDIGSRPSA (84 aa)) is domain I, interacts with DnaA modulators. Residues 84–125 (APRPVQATAAVERPKFEQNTKPAKTSFNVNSPEPAMAANHRS) are domain II. The domain III, AAA+ region stretch occupies residues 126-342 (NINRTYQFEN…GALNRVIANA (217 aa)). Residues glycine 170, glycine 172, lysine 173, and threonine 174 each contribute to the ATP site. The tract at residues 343 to 462 (NFTGRPITID…YANLIRTLSS (120 aa)) is domain IV, binds dsDNA.

The protein belongs to the DnaA family. As to quaternary structure, oligomerizes as a right-handed, spiral filament on DNA at oriC.

It is found in the cytoplasm. Its function is as follows. Plays an essential role in the initiation and regulation of chromosomal replication. ATP-DnaA binds to the origin of replication (oriC) to initiate formation of the DNA replication initiation complex once per cell cycle. Binds the DnaA box (a 9 base pair repeat at the origin) and separates the double-stranded (ds)DNA. Forms a right-handed helical filament on oriC DNA; dsDNA binds to the exterior of the filament while single-stranded (ss)DNA is stabiized in the filament's interior. The ATP-DnaA-oriC complex binds and stabilizes one strand of the AT-rich DNA unwinding element (DUE), permitting loading of DNA polymerase. After initiation quickly degrades to an ADP-DnaA complex that is not apt for DNA replication. Binds acidic phospholipids. The sequence is that of Chromosomal replication initiator protein DnaA from Shewanella sediminis (strain HAW-EB3).